The primary structure comprises 496 residues: Rhamnulokinase (496 aa).

13 to 17 (ASSGR) serves as a coordination point for ATP. Residues Gly-83 and 236–238 (HDT) contribute to the substrate site. Asp-237 acts as the Proton acceptor in catalysis. Residue Thr-259 participates in ATP binding. Residue Asn-296 participates in substrate binding. ATP is bound at residue Gln-304. The cysteines at positions 353 and 370 are disulfide-linked. Residue Gly-402 participates in ATP binding. A disulfide bond links Cys-413 and Cys-417.

The protein belongs to the rhamnulokinase family. Requires Mg(2+) as cofactor.

The enzyme catalyses L-rhamnulose + ATP = L-rhamnulose 1-phosphate + ADP + H(+). The protein operates within carbohydrate degradation; L-rhamnose degradation; glycerone phosphate from L-rhamnose: step 2/3. Involved in the catabolism of L-rhamnose (6-deoxy-L-mannose). Catalyzes the transfer of the gamma-phosphate group from ATP to the 1-hydroxyl group of L-rhamnulose to yield L-rhamnulose 1-phosphate. The protein is Rhamnulokinase of Pectobacterium atrosepticum (strain SCRI 1043 / ATCC BAA-672) (Erwinia carotovora subsp. atroseptica).